A 199-amino-acid polypeptide reads, in one-letter code: Imidazoleglycerol-phosphate dehydratase (199 aa).

The protein belongs to the imidazoleglycerol-phosphate dehydratase family.

It is found in the cytoplasm. It carries out the reaction D-erythro-1-(imidazol-4-yl)glycerol 3-phosphate = 3-(imidazol-4-yl)-2-oxopropyl phosphate + H2O. Its pathway is amino-acid biosynthesis; L-histidine biosynthesis; L-histidine from 5-phospho-alpha-D-ribose 1-diphosphate: step 6/9. This chain is Imidazoleglycerol-phosphate dehydratase, found in Lactococcus lactis subsp. cremoris (strain MG1363).